Here is a 458-residue protein sequence, read N- to C-terminus: Transcription factor Atf1 (458 aa).

Residues 347-410 (EEKRRNFLER…VNLKTLLLAH (64 aa)) form the bZIP domain. Residues 349-378 (KRRNFLERNRVAALKCRQRKKQWLANLQNK) form a basic motif region. The tract at residues 389–403 (LTATVTQLREEIVNL) is leucine-zipper.

The protein belongs to the bZIP family.

It localises to the nucleus. In terms of biological role, transcription factor that positively regulates vegetative growth, reproduction, and osmotic stress response. This is Transcription factor Atf1 from Penicillium expansum (Blue mold rot fungus).